Reading from the N-terminus, the 332-residue chain is Phosphate acyltransferase (332 aa).

It belongs to the PlsX family. As to quaternary structure, homodimer. Probably interacts with PlsY.

Its subcellular location is the cytoplasm. It catalyses the reaction a fatty acyl-[ACP] + phosphate = an acyl phosphate + holo-[ACP]. Its pathway is lipid metabolism; phospholipid metabolism. Its function is as follows. Catalyzes the reversible formation of acyl-phosphate (acyl-PO(4)) from acyl-[acyl-carrier-protein] (acyl-ACP). This enzyme utilizes acyl-ACP as fatty acyl donor, but not acyl-CoA. In Caldanaerobacter subterraneus subsp. tengcongensis (strain DSM 15242 / JCM 11007 / NBRC 100824 / MB4) (Thermoanaerobacter tengcongensis), this protein is Phosphate acyltransferase.